A 262-amino-acid chain; its full sequence is Ankyrin repeat domain-containing protein 7 (262 aa).

ANK repeat units follow at residues 67-96, 100-129, 133-162, 166-195, and 199-228; these read KYRT…KINI, ENKS…DPNL, RYNT…DLEA, DGYT…DVNA, and YQRT…ELSC.

The protein is Ankyrin repeat domain-containing protein 7 (ANKRD7) of Macaca fascicularis (Crab-eating macaque).